We begin with the raw amino-acid sequence, 353 residues long: Protein RecA (353 aa).

67 to 74 (GPESSGKT) provides a ligand contact to ATP.

Belongs to the RecA family.

The protein localises to the cytoplasm. Can catalyze the hydrolysis of ATP in the presence of single-stranded DNA, the ATP-dependent uptake of single-stranded DNA by duplex DNA, and the ATP-dependent hybridization of homologous single-stranded DNAs. It interacts with LexA causing its activation and leading to its autocatalytic cleavage. This is Protein RecA from Shewanella woodyi (strain ATCC 51908 / MS32).